Reading from the N-terminus, the 704-residue chain is Seven transmembrane domain-containing serine/threonine-protein kinase 2 (704 aa).

At 1 to 5 (MPSKE) the chain is on the extracellular side. Residues 6 to 26 (FIIPLILLCFYSVNGFVAVIS) traverse the membrane as a helical segment. At 27–42 (SLVELFIHKASWNSIK) the chain is on the cytoplasmic side. A helical transmembrane segment spans residues 43–63 (IFFYSLLILQCLCRCIIIGWG). At 64–76 (MIETVQGGEFYSN) the chain is on the extracellular side. Residues 77 to 97 (FPSLLFISYAGLVALQMIQFL) traverse the membrane as a helical segment. At 98–121 (PNDNQYLLLSEGKKNNHKVKVGTN) the chain is on the cytoplasmic side. Residues 122–142 (ILIFFNLFMYFGMFLLFGIAE) form a helical membrane-spanning segment. Over 143 to 185 (KQVGNSTSFNHHGNHNSTTSTSTDEIPLVSTEVGELYLFGDKD) the chain is Extracellular. N-linked (GlcNAc...) asparagine glycans are attached at residues Asn147 and Asn158. A helical transmembrane segment spans residues 186–206 (PIYIVLDCFYFVCLLLLLIFH). The Cytoplasmic segment spans residues 207 to 224 (SYVGWKTYKRNKDLFGIK). A helical transmembrane segment spans residues 225–245 (LNVIHLILLICIFIRSLLVII). Residues 246–265 (DPSSPNNSILHIDTESWLIY) lie on the Extracellular side of the membrane. Asn251 carries N-linked (GlcNAc...) asparagine glycosylation. A helical transmembrane segment spans residues 266–286 (IYTISYYVVGEIIPGMLLIVI). Residues 287–704 (EFLLPYHKRK…WSIEKDSSSK (418 aa)) lie on the Cytoplasmic side of the membrane. Residues 317-682 (IAIHELLGMG…SLGVKFHLAN (366 aa)) enclose the Protein kinase domain. Residues 323 to 331 (LGMGGSGAM) and Lys350 contribute to the ATP site. The active-site Proton acceptor is the Asp506.

Belongs to the protein kinase superfamily. Ser/Thr protein kinase family.

It localises to the membrane. It catalyses the reaction L-seryl-[protein] + ATP = O-phospho-L-seryl-[protein] + ADP + H(+). The catalysed reaction is L-threonyl-[protein] + ATP = O-phospho-L-threonyl-[protein] + ADP + H(+). This is Seven transmembrane domain-containing serine/threonine-protein kinase 2 (7tmk2) from Dictyostelium discoideum (Social amoeba).